The primary structure comprises 511 residues: Coiled-coil domain-containing protein 125 (511 aa).

A compositionally biased stretch (polar residues) spans 1–12; it reads MSKVARSSSESD. The disordered stretch occupies residues 1-110; sequence MSKVARSSSE…TVDSNSELSN (110 aa). The span at 43–54 shows a compositional bias: basic and acidic residues; it reads EFSHRSRKRSDG. Polar residues predominate over residues 83–108; it reads QDTFPQVSRISNYRRQSSTVDSNSEL. 2 coiled-coil regions span residues 105–243 and 293–325; these read NSEL…LEAL and RMAASTRKLLLQLKQELEILQKSKEEAYVMADA. Ser-504 carries the phosphoserine modification.

The protein localises to the cytoplasm. May be involved in the regulation of cell migration. In Homo sapiens (Human), this protein is Coiled-coil domain-containing protein 125 (CCDC125).